A 310-amino-acid polypeptide reads, in one-letter code: Mitochondrial thiamine pyrophosphate carrier 1 (310 aa).

6 helical membrane passes run 16–32 (VSPY…GGVA), 88–104 (ILYV…YSAL), 117–141 (IVMP…LTTY), 173–197 (GISG…LMFW), 218–234 (ICGF…TFPL), and 274–291 (GYGV…ISLW). 3 Solcar repeats span residues 16 to 107 (VSPY…LSKS), 120 to 205 (PSSV…AREF), and 211 to 299 (HVPF…VISA).

The protein belongs to the mitochondrial carrier (TC 2.A.29) family.

The protein localises to the mitochondrion inner membrane. Functionally, mitochondrial transporter that mediates uptake of thiamine pyrophosphate (ThPP) into mitochondria. This Lodderomyces elongisporus (strain ATCC 11503 / CBS 2605 / JCM 1781 / NBRC 1676 / NRRL YB-4239) (Yeast) protein is Mitochondrial thiamine pyrophosphate carrier 1 (TPC1).